A 201-amino-acid chain; its full sequence is MLAFTLRFIKNKRYLATLAGALVIIAGLTSQHAWSGNGLPQINGKALAALAKQHPVVVLFRHAERCDRSDNTCLSDSTGITVNGAQDARALGKAFSADIQNYNLYSSNTVRTIQSATWFSAGRSLTVDKKMMDCGSGIYASINTLLKKSQNKNIVIFTHNHCLTYIAKNKRGVKFDPDYLNALVMHAENGKLFLDGEFVPG.

Positions 1-35 are cleaved as a signal peptide; the sequence is MLAFTLRFIKNKRYLATLAGALVIIAGLTSQHAWS.

Belongs to the phosphoglycerate mutase family. Ais subfamily.

Its subcellular location is the periplasm. It functions in the pathway bacterial outer membrane biogenesis; lipopolysaccharide metabolism. Its function is as follows. Catalyzes the dephosphorylation of heptose(II) of the outer membrane lipopolysaccharide core. The protein is Lipopolysaccharide core heptose(II)-phosphate phosphatase of Salmonella heidelberg (strain SL476).